The chain runs to 101 residues: Apolipoprotein C-II (101 aa).

The signal sequence occupies residues 1–22 (MGIRYLLVLVLVLLVLGCEVQG). Residues 66 to 74 (TVDEKIREI) are lipid binding. Residues 78-101 (STAAVSTYAGIFTDQLLSMLKGDQ) are lipoprotein lipase cofactor.

This sequence belongs to the apolipoprotein C2 family. In terms of processing, proapolipoprotein C-II is synthesized as a sialic acid containing glycoprotein which is subsequently desialylated prior to its proteolytic processing. Proapolipoprotein C-II, the major form found in plasma undergoes proteolytic cleavage of its N-terminal hexapeptide to generate apolipoprotein C-II, which occurs as the minor form in plasma.

The protein localises to the secreted. Functionally, component of chylomicrons, very low-density lipoproteins (VLDL), low-density lipoproteins (LDL), and high-density lipoproteins (HDL) in plasma. Plays an important role in lipoprotein metabolism as an activator of lipoprotein lipase. Both proapolipoprotein C-II and apolipoprotein C-II can activate lipoprotein lipase. This Mirounga angustirostris (Northern elephant seal) protein is Apolipoprotein C-II (APOC2).